We begin with the raw amino-acid sequence, 417 residues long: Serine hydroxymethyltransferase (417 aa).

(6S)-5,6,7,8-tetrahydrofolate-binding positions include L121 and 125–127 (GHL). K229 is modified (N6-(pyridoxal phosphate)lysine). 355–357 (SPF) is a (6S)-5,6,7,8-tetrahydrofolate binding site.

Belongs to the SHMT family. In terms of assembly, homodimer. It depends on pyridoxal 5'-phosphate as a cofactor.

The protein resides in the cytoplasm. It catalyses the reaction (6R)-5,10-methylene-5,6,7,8-tetrahydrofolate + glycine + H2O = (6S)-5,6,7,8-tetrahydrofolate + L-serine. Its pathway is one-carbon metabolism; tetrahydrofolate interconversion. It functions in the pathway amino-acid biosynthesis; glycine biosynthesis; glycine from L-serine: step 1/1. Catalyzes the reversible interconversion of serine and glycine with tetrahydrofolate (THF) serving as the one-carbon carrier. This reaction serves as the major source of one-carbon groups required for the biosynthesis of purines, thymidylate, methionine, and other important biomolecules. Also exhibits THF-independent aldolase activity toward beta-hydroxyamino acids, producing glycine and aldehydes, via a retro-aldol mechanism. The chain is Serine hydroxymethyltransferase from Shewanella sp. (strain ANA-3).